Reading from the N-terminus, the 121-residue chain is Large ribosomal subunit protein bL12 (121 aa).

Belongs to the bacterial ribosomal protein bL12 family. In terms of assembly, homodimer. Part of the ribosomal stalk of the 50S ribosomal subunit. Forms a multimeric L10(L12)X complex, where L10 forms an elongated spine to which 2 to 4 L12 dimers bind in a sequential fashion. Binds GTP-bound translation factors.

Its function is as follows. Forms part of the ribosomal stalk which helps the ribosome interact with GTP-bound translation factors. Is thus essential for accurate translation. This Aeromonas hydrophila subsp. hydrophila (strain ATCC 7966 / DSM 30187 / BCRC 13018 / CCUG 14551 / JCM 1027 / KCTC 2358 / NCIMB 9240 / NCTC 8049) protein is Large ribosomal subunit protein bL12.